Here is a 171-residue protein sequence, read N- to C-terminus: 3-hydroxydecanoyl-[acyl-carrier-protein] dehydratase (171 aa).

His-70 is an active-site residue.

It belongs to the thioester dehydratase family. FabA subfamily. Homodimer.

It localises to the cytoplasm. The enzyme catalyses a (3R)-hydroxyacyl-[ACP] = a (2E)-enoyl-[ACP] + H2O. It catalyses the reaction (3R)-hydroxydecanoyl-[ACP] = (2E)-decenoyl-[ACP] + H2O. The catalysed reaction is (2E)-decenoyl-[ACP] = (3Z)-decenoyl-[ACP]. Its pathway is lipid metabolism; fatty acid biosynthesis. Necessary for the introduction of cis unsaturation into fatty acids. Catalyzes the dehydration of (3R)-3-hydroxydecanoyl-ACP to E-(2)-decenoyl-ACP and then its isomerization to Z-(3)-decenoyl-ACP. Can catalyze the dehydratase reaction for beta-hydroxyacyl-ACPs with saturated chain lengths up to 16:0, being most active on intermediate chain length. The sequence is that of 3-hydroxydecanoyl-[acyl-carrier-protein] dehydratase from Mesorhizobium japonicum (strain LMG 29417 / CECT 9101 / MAFF 303099) (Mesorhizobium loti (strain MAFF 303099)).